We begin with the raw amino-acid sequence, 173 residues long: Membrane-bound hydrogenase subunit beta (173 aa).

It belongs to the complex I 30 kDa subunit family. In terms of assembly, the membrane-bound hydrogenase complex is composed of MbhK and MbhL, and may also contain MbhJ. It depends on Ni(2+) as a cofactor.

It is found in the cell membrane. The catalysed reaction is H2 + 2 oxidized [2Fe-2S]-[ferredoxin] = 2 reduced [2Fe-2S]-[ferredoxin] + 2 H(+). With respect to regulation, inhibited by 0.1 mM Cu(2+). Functionally, beta subunit of a hydrogen-evolving hydrogenase that utilizes protons both as a substrate for hydrogen production and proton translocation. Acts by coupling the redox reaction via ferredoxin and iron-sulfur (Fe-S) clusters to proton translocation across the membrane thereby conserving the redox energy in a proton gradient. The sequence is that of Membrane-bound hydrogenase subunit beta from Pyrococcus furiosus (strain ATCC 43587 / DSM 3638 / JCM 8422 / Vc1).